Consider the following 96-residue polypeptide: Co-chaperonin GroES (96 aa).

It belongs to the GroES chaperonin family. In terms of assembly, heptamer of 7 subunits arranged in a ring. Interacts with the chaperonin GroEL.

The protein localises to the cytoplasm. In terms of biological role, together with the chaperonin GroEL, plays an essential role in assisting protein folding. The GroEL-GroES system forms a nano-cage that allows encapsulation of the non-native substrate proteins and provides a physical environment optimized to promote and accelerate protein folding. GroES binds to the apical surface of the GroEL ring, thereby capping the opening of the GroEL channel. In Methylorubrum populi (strain ATCC BAA-705 / NCIMB 13946 / BJ001) (Methylobacterium populi), this protein is Co-chaperonin GroES.